Consider the following 595-residue polypeptide: DNA mismatch repair protein MutL (595 aa).

It belongs to the DNA mismatch repair MutL/HexB family.

This protein is involved in the repair of mismatches in DNA. It is required for dam-dependent methyl-directed DNA mismatch repair. May act as a 'molecular matchmaker', a protein that promotes the formation of a stable complex between two or more DNA-binding proteins in an ATP-dependent manner without itself being part of a final effector complex. The sequence is that of DNA mismatch repair protein MutL from Endomicrobium trichonymphae.